The following is a 263-amino-acid chain: Hydroxyacylglutathione hydrolase (263 aa).

Zn(2+) is bound by residues His56, His58, Asp60, His61, His115, Asp135, and His175.

Belongs to the metallo-beta-lactamase superfamily. Glyoxalase II family. As to quaternary structure, monomer. It depends on Zn(2+) as a cofactor.

It catalyses the reaction an S-(2-hydroxyacyl)glutathione + H2O = a 2-hydroxy carboxylate + glutathione + H(+). It participates in secondary metabolite metabolism; methylglyoxal degradation; (R)-lactate from methylglyoxal: step 2/2. Functionally, thiolesterase that catalyzes the hydrolysis of S-D-lactoyl-glutathione to form glutathione and D-lactic acid. In Nitrosococcus oceani (strain ATCC 19707 / BCRC 17464 / JCM 30415 / NCIMB 11848 / C-107), this protein is Hydroxyacylglutathione hydrolase.